A 534-amino-acid chain; its full sequence is Peptide chain release factor 3 (534 aa).

The 270-residue stretch at 9 to 278 (SRRRTFAIIS…FFVEHAPSPQ (270 aa)) folds into the tr-type G domain. GTP-binding positions include 18–25 (SHPDAGKT), 86–90 (DTPGH), and 140–143 (NKLD).

The protein belongs to the TRAFAC class translation factor GTPase superfamily. Classic translation factor GTPase family. PrfC subfamily.

The protein localises to the cytoplasm. Its function is as follows. Increases the formation of ribosomal termination complexes and stimulates activities of RF-1 and RF-2. It binds guanine nucleotides and has strong preference for UGA stop codons. It may interact directly with the ribosome. The stimulation of RF-1 and RF-2 is significantly reduced by GTP and GDP, but not by GMP. This is Peptide chain release factor 3 from Stenotrophomonas maltophilia (strain K279a).